The sequence spans 186 residues: Quinone reductase (186 aa).

Residues 13 to 20, 80 to 83, and S116 each bind FMN; these read SLRKESYN and EHNR.

Belongs to the SsuE family. In terms of assembly, homotetramer. Dimer of dimers. The tetrameric configuration has a central role in chromate reductase activity. It depends on FMN as a cofactor.

The enzyme catalyses a quinone + NADH + H(+) = a quinol + NAD(+). It carries out the reaction a quinone + NADPH + H(+) = a quinol + NADP(+). It catalyses the reaction Cr(6+) + 2 NADH + O2 = Cr(3+) + superoxide + 2 NAD(+) + 2 H(+). The catalysed reaction is Cr(6+) + 2 NADPH + O2 = Cr(3+) + superoxide + 2 NADP(+) + 2 H(+). Its activity is regulated as follows. Non-competitively inhibited by sulfate. Catalyzes the reduction of quinones. Acts by simultaneous two-electron transfer, avoiding formation of highly reactive semiquinone intermediates and producing quinols that promote tolerance of H(2)O(2). Quinone reduction is probably the primary biological role of ChrR. Can also reduce toxic chromate to insoluble and less toxic Cr(3+). Catalyzes the transfer of three electrons to Cr(6+) producing Cr(3+) and one electron to molecular oxygen. This reaction produces transiently a minimal amount of the toxic Cr(5+) species and reactive oxygen species (ROS). Chromate reduction protects the cell against chromate toxicity, but is likely a secondary activity. This chain is Quinone reductase (chrR), found in Pseudomonas putida (Arthrobacter siderocapsulatus).